Here is a 294-residue protein sequence, read N- to C-terminus: Nucleotide-binding protein Smal_0950 (294 aa).

Position 16–23 (16–23 (GLSGSGKS)) interacts with ATP. 69 to 72 (DVRG) lines the GTP pocket.

Belongs to the RapZ-like family.

Its function is as follows. Displays ATPase and GTPase activities. In Stenotrophomonas maltophilia (strain R551-3), this protein is Nucleotide-binding protein Smal_0950.